Consider the following 188-residue polypeptide: Ribosome maturation factor RimP (188 aa).

Belongs to the RimP family.

The protein localises to the cytoplasm. Functionally, required for maturation of 30S ribosomal subunits. This is Ribosome maturation factor RimP from Erythrobacter litoralis (strain HTCC2594).